A 1071-amino-acid polypeptide reads, in one-letter code: DNA-directed RNA polymerase subunit beta (1071 aa).

Belongs to the RNA polymerase beta chain family. In terms of assembly, in plastids the minimal PEP RNA polymerase catalytic core is composed of four subunits: alpha, beta, beta', and beta''. When a (nuclear-encoded) sigma factor is associated with the core the holoenzyme is formed, which can initiate transcription.

The protein localises to the plastid. Its subcellular location is the chloroplast. The enzyme catalyses RNA(n) + a ribonucleoside 5'-triphosphate = RNA(n+1) + diphosphate. In terms of biological role, DNA-dependent RNA polymerase catalyzes the transcription of DNA into RNA using the four ribonucleoside triphosphates as substrates. In Acorus gramineus (Dwarf sweet flag), this protein is DNA-directed RNA polymerase subunit beta.